Here is a 1115-residue protein sequence, read N- to C-terminus: Tbc2 translation factor, chloroplastic (1115 aa).

2 stretches are compositionally biased toward low complexity: residues T69–S87 and R163–A175. 2 disordered regions span residues T69–L90 and R163–S210. Over residues R176–G186 the composition is skewed to gly residues. A compositionally biased stretch (low complexity) spans S187–S210. 9 consecutive repeat copies span residues L483–A521, L607–A645, L685–A723, L724–L763, M764–C803, L804–R842, M843–R880, P990–W1029, and W1030–A1068. The interval L483–A1068 is 9 X 38 AA approximate repeats.

Part of a 400 kDa complex which is not stably associated with RNA.

The protein resides in the plastid. Its subcellular location is the chloroplast stroma. In terms of biological role, required for expression of the chloroplast encoded psbC mRNA, most likely for translation initiation. Interacts with the 5'-UTR of psbC. The protein is Tbc2 translation factor, chloroplastic (TBC2) of Chlamydomonas reinhardtii (Chlamydomonas smithii).